A 380-amino-acid chain; its full sequence is Histidinol-phosphate aminotransferase (380 aa).

Lys235 bears the N6-(pyridoxal phosphate)lysine mark.

This sequence belongs to the class-II pyridoxal-phosphate-dependent aminotransferase family. Histidinol-phosphate aminotransferase subfamily. As to quaternary structure, homodimer. It depends on pyridoxal 5'-phosphate as a cofactor.

It carries out the reaction L-histidinol phosphate + 2-oxoglutarate = 3-(imidazol-4-yl)-2-oxopropyl phosphate + L-glutamate. It functions in the pathway amino-acid biosynthesis; L-histidine biosynthesis; L-histidine from 5-phospho-alpha-D-ribose 1-diphosphate: step 7/9. This is Histidinol-phosphate aminotransferase from Rhodococcus jostii (strain RHA1).